An 883-amino-acid polypeptide reads, in one-letter code: Phosphoenolpyruvate carboxylase (883 aa).

Residues His-138 and Lys-546 contribute to the active site.

This sequence belongs to the PEPCase type 1 family. Mg(2+) is required as a cofactor.

The enzyme catalyses oxaloacetate + phosphate = phosphoenolpyruvate + hydrogencarbonate. Forms oxaloacetate, a four-carbon dicarboxylic acid source for the tricarboxylic acid cycle. The chain is Phosphoenolpyruvate carboxylase from Shigella dysenteriae serotype 1 (strain Sd197).